A 441-amino-acid chain; its full sequence is Eukaryotic translation initiation factor 3 subunit E (441 aa).

Residues 223–407 (IFFNHDNGRT…GTVIMEPTQP (185 aa)) enclose the PCI domain.

Belongs to the eIF-3 subunit E family. In terms of assembly, component of the eukaryotic translation initiation factor 3 (eIF-3) complex (Potential). Binds to the translation initiation factors TIF3F1 and TIF3H1. Associates with the CSN (COP9 signalosome) complex. Interacts directly with CSN1, CSN4, CSN6A, CSN6B, CSN7, CSN8 and TIF3C1. Binds to 40S small ribosomal subunit S9 (RPS9B and RPS9C) via its N-terminal part. Interacts with the 26S proteasome subunit RPN12a via its C-terminal part. Also binds with At1g27930 and At4g30620.

The protein resides in the cytoplasm. It is found in the nucleus. Component of the eukaryotic translation initiation factor 3 (eIF-3) complex, which is involved in protein synthesis of a specialized repertoire of mRNAs and, together with other initiation factors, stimulates binding of mRNA and methionyl-tRNAi to the 40S ribosome. The eIF-3 complex specifically targets and initiates translation of a subset of mRNAs involved in cell proliferation (Potential). Negatively regulates translation during flower development. The chain is Eukaryotic translation initiation factor 3 subunit E from Arabidopsis thaliana (Mouse-ear cress).